A 205-amino-acid polypeptide reads, in one-letter code: MPVVFVAASKLPTPFAEFAMHGFIESATGREHVVLSLGDVADGAPVLGRVHSECLTGDALFSQRCDCGSQLEAAMRAIATEGRGVLLYLRQEGRGIGLMNKIRAYELQDGGADTVEANERLGFAADQRDYAICLPMLQHLGVQSLRLMTNNPRKVKALTDMGINVAERVPLHTGQNPHNRLYLATKAGKLGHMMGNEHQSEVGPA.

49–53 (RVHSE) provides a ligand contact to GTP. Zn(2+) is bound by residues Cys-54, Cys-65, and Cys-67. Residues Gln-70, 92–94 (EGR), and Thr-114 each bind GTP. Asp-126 serves as the catalytic Proton acceptor. The active-site Nucleophile is Arg-128. The GTP site is built by Thr-149 and Lys-154.

Belongs to the GTP cyclohydrolase II family. Zn(2+) serves as cofactor.

The enzyme catalyses GTP + 4 H2O = 2,5-diamino-6-hydroxy-4-(5-phosphoribosylamino)-pyrimidine + formate + 2 phosphate + 3 H(+). It participates in cofactor biosynthesis; riboflavin biosynthesis; 5-amino-6-(D-ribitylamino)uracil from GTP: step 1/4. In terms of biological role, catalyzes the conversion of GTP to 2,5-diamino-6-ribosylamino-4(3H)-pyrimidinone 5'-phosphate (DARP), formate and pyrophosphate. The chain is GTP cyclohydrolase-2 from Pseudomonas syringae pv. tomato (strain ATCC BAA-871 / DC3000).